A 269-amino-acid polypeptide reads, in one-letter code: JmjC domain-containing protein 8 (269 aa).

An N-terminal signal peptide occupies residues Met-1 to Pro-24. N-linked (GlcNAc...) asparagine glycosylation is found at Asn-135, Asn-145, and Asn-214. The JmjC domain maps to Asp-136–Gly-269.

Oligomer. Dimer. Interacts with PKM; regulates angiogenesis and metabolism. N-glycosylated.

Its subcellular location is the endoplasmic reticulum lumen. It localises to the cytoplasm. Functionally, functions as a positive regulator of TNF-induced NF-kappaB signaling. Regulates angiogenesis and cellular metabolism through interaction with PKM. This chain is JmjC domain-containing protein 8, found in Mus musculus (Mouse).